Reading from the N-terminus, the 150-residue chain is Transthyretin (150 aa).

Positions 1–20 (MAFHSMLLVFLAGLVFLTEA) are cleaved as a signal peptide. The residue at position 33 (Cys-33) is a Sulfocysteine. Positions 38, 77, and 140 each coordinate L-thyroxine.

It belongs to the transthyretin family. In terms of assembly, homotetramer. Dimer of dimers. In the homotetramer, subunits assemble around a central channel that can accommodate two ligand molecules. Interacts with RBP4. Post-translationally, sulfonation of the reactive cysteine Cys-33 enhances the stability of the native conformation of TTR, avoiding misassembly of the protein leading to amyloid formation. As to expression, strongly expressed in the brain, and to a lesser extent in the eye.

The protein resides in the secreted. Its function is as follows. Thyroid hormone-binding protein, with a much higher binding affinity for triiodothyronine (T3) than for thyroxine (T4). Probably transports triiodothyronine from the bloodstream to the brain. The chain is Transthyretin (TTR) from Crocodylus porosus (Saltwater crocodile).